The following is a 291-amino-acid chain: Methylsterol monooxygenase 1-3 (291 aa).

3 helical membrane passes run 41 to 61 (TILV…IVEW), 92 to 112 (FLLV…MVGI), and 114 to 134 (SGLP…YFLI). The Fatty acid hydroxylase domain maps to 128–263 (LVVYFLIEDY…FTYCDYIYGT (136 aa)). Residues 143 to 147 (HRWMH) carry the Histidine box-1 motif. The short motif at 156–160 (HRIHH) is the Histidine box-2 element. A helical membrane pass occupies residues 178–198 (ILILGIPTFLGPAIAPGHIMT). Positions 235–241 (YHDYHHY) match the Histidine box-3 motif.

It belongs to the sterol desaturase family. As to quaternary structure, interacts with ACBP1. Fe cation is required as a cofactor. In terms of tissue distribution, expressed at low levels in leaves, roots, siliques and flowers.

It localises to the endoplasmic reticulum membrane. The enzyme catalyses 4,4-dimethyl-5alpha-cholest-7-en-3beta-ol + 6 Fe(II)-[cytochrome b5] + 3 O2 + 5 H(+) = 4alpha-carboxy-4beta-methyl-5alpha-cholest-7-ene-3beta-ol + 6 Fe(III)-[cytochrome b5] + 4 H2O. It carries out the reaction 24-methylidenelophenol + 6 Fe(II)-[cytochrome b5] + 3 O2 + 5 H(+) = 4alpha-carboxy-ergosta-7,24(24(1))-dien-3beta-ol + 6 Fe(III)-[cytochrome b5] + 4 H2O. In terms of biological role, non-heme iron oxygenase involved in sterols biosynthesis by catalyzing the removal of the first methyl group at the C-4 position. 4,4-dimethyl-9-beta,19-cyclopropylsterols such as 24-methylenecycloartanol are the preferred substrates. This Arabidopsis thaliana (Mouse-ear cress) protein is Methylsterol monooxygenase 1-3.